The primary structure comprises 396 residues: Cathepsin D (396 aa).

Positions 1-18 are cleaved as a signal peptide; sequence MKMLLLCVFSALALTNDA. Positions 19–61 are cleaved as a propeptide — activation peptide; it reads LVRIPLKKFRSIRRQLTDSGKRAEELLADHHSLKYNLSFPASN. The 318-residue stretch at 76–393 folds into the Peptidase A1 domain; it reads YYGEIGLGTP…DRDANRVGFA (318 aa). Residue Asp-94 is part of the active site. A disulfide bridge connects residues Cys-107 and Cys-114. Residues Asn-131 and Asn-249 are each glycosylated (N-linked (GlcNAc...) asparagine). The cysteines at positions 272 and 276 are disulfide-linked. Asp-281 is an active-site residue. An intrachain disulfide couples Cys-315 to Cys-352.

The protein belongs to the peptidase A1 family. Monomer.

The protein resides in the lysosome. It catalyses the reaction Specificity similar to, but narrower than, that of pepsin A. Does not cleave the 4-Gln-|-His-5 bond in B chain of insulin.. Its activity is regulated as follows. Inhibited by pepstatin. In terms of biological role, acid protease active in intracellular protein breakdown. The protein is Cathepsin D (ctsd) of Chionodraco hamatus (Antarctic teleost icefish).